The following is a 330-amino-acid chain: Taste receptor type 2 member 136 (330 aa).

At methionine 1–alanine 32 the chain is on the extracellular side. A helical transmembrane segment spans residues glycine 33–valine 53. At threonine 54–serine 73 the chain is on the cytoplasmic side. A helical transmembrane segment spans residues leucine 74–phenylalanine 94. Residues histidine 95 to threonine 122 lie on the Extracellular side of the membrane. The chain crosses the membrane as a helical span at residues isoleucine 123–leucine 143. Topologically, residues lysine 144–serine 149 are cytoplasmic. Residues valine 150 to threonine 170 traverse the membrane as a helical segment. Over valine 171–serine 201 the chain is Extracellular. Residues asparagine 183 and asparagine 195 are each glycosylated (N-linked (GlcNAc...) asparagine). Residues phenylalanine 202 to tyrosine 222 traverse the membrane as a helical segment. Topologically, residues serine 223–lysine 248 are cytoplasmic. A helical membrane pass occupies residues alanine 249 to isoleucine 269. Residues serine 270 to histidine 283 lie on the Extracellular side of the membrane. Residues leucine 284 to glycine 304 form a helical membrane-spanning segment. At asparagine 305–proline 330 the chain is on the cytoplasmic side.

The protein belongs to the G-protein coupled receptor T2R family.

The protein localises to the membrane. Functionally, putative taste receptor which may play a role in the perception of bitterness. The chain is Taste receptor type 2 member 136 from Rattus norvegicus (Rat).